Reading from the N-terminus, the 224-residue chain is Deoxyribose-phosphate aldolase (224 aa).

Asp-92 functions as the Proton donor/acceptor in the catalytic mechanism. Lys-155 serves as the catalytic Schiff-base intermediate with acetaldehyde. Lys-184 serves as the catalytic Proton donor/acceptor.

It belongs to the DeoC/FbaB aldolase family. DeoC type 1 subfamily.

It localises to the cytoplasm. The enzyme catalyses 2-deoxy-D-ribose 5-phosphate = D-glyceraldehyde 3-phosphate + acetaldehyde. Its pathway is carbohydrate degradation; 2-deoxy-D-ribose 1-phosphate degradation; D-glyceraldehyde 3-phosphate and acetaldehyde from 2-deoxy-alpha-D-ribose 1-phosphate: step 2/2. Functionally, catalyzes a reversible aldol reaction between acetaldehyde and D-glyceraldehyde 3-phosphate to generate 2-deoxy-D-ribose 5-phosphate. This is Deoxyribose-phosphate aldolase from Shouchella clausii (strain KSM-K16) (Alkalihalobacillus clausii).